A 279-amino-acid polypeptide reads, in one-letter code: Peptide deformylase 1B, chloroplastic (279 aa).

The Fe cation site is built by C177 and H219. E220 is a catalytic residue. H223 is a Fe cation binding site.

Belongs to the polypeptide deformylase family. Requires Fe(2+) as cofactor.

The protein resides in the plastid. Its subcellular location is the chloroplast. It catalyses the reaction N-terminal N-formyl-L-methionyl-[peptide] + H2O = N-terminal L-methionyl-[peptide] + formate. In terms of biological role, removes the formyl group from the N-terminal Met of newly synthesized proteins. The polypeptide is Peptide deformylase 1B, chloroplastic (PDF1B) (Solanum lycopersicum (Tomato)).